A 104-amino-acid chain; its full sequence is Large ribosomal subunit protein bL21 (104 aa).

This sequence belongs to the bacterial ribosomal protein bL21 family. As to quaternary structure, part of the 50S ribosomal subunit. Contacts protein L20.

Its function is as follows. This protein binds to 23S rRNA in the presence of protein L20. The sequence is that of Large ribosomal subunit protein bL21 from Pseudomonas entomophila (strain L48).